We begin with the raw amino-acid sequence, 61 residues long: Small ribosomal subunit protein uS14 (61 aa).

Residues C24, C27, C40, and C43 each coordinate Zn(2+).

This sequence belongs to the universal ribosomal protein uS14 family. Zinc-binding uS14 subfamily. Part of the 30S ribosomal subunit. Contacts proteins S3 and S10. It depends on Zn(2+) as a cofactor.

Its function is as follows. Binds 16S rRNA, required for the assembly of 30S particles and may also be responsible for determining the conformation of the 16S rRNA at the A site. The protein is Small ribosomal subunit protein uS14 of Nautilia profundicola (strain ATCC BAA-1463 / DSM 18972 / AmH).